A 250-amino-acid polypeptide reads, in one-letter code: NAD(P)H-quinone oxidoreductase subunit K, chloroplastic (250 aa).

4 residues coordinate [4Fe-4S] cluster: Cys-67, Cys-68, Cys-132, and Cys-163.

Belongs to the complex I 20 kDa subunit family. In terms of assembly, NDH is composed of at least 16 different subunits, 5 of which are encoded in the nucleus. It depends on [4Fe-4S] cluster as a cofactor.

The protein resides in the plastid. It is found in the chloroplast thylakoid membrane. It carries out the reaction a plastoquinone + NADH + (n+1) H(+)(in) = a plastoquinol + NAD(+) + n H(+)(out). The enzyme catalyses a plastoquinone + NADPH + (n+1) H(+)(in) = a plastoquinol + NADP(+) + n H(+)(out). NDH shuttles electrons from NAD(P)H:plastoquinone, via FMN and iron-sulfur (Fe-S) centers, to quinones in the photosynthetic chain and possibly in a chloroplast respiratory chain. The immediate electron acceptor for the enzyme in this species is believed to be plastoquinone. Couples the redox reaction to proton translocation, and thus conserves the redox energy in a proton gradient. This Adiantum capillus-veneris (Maidenhair fern) protein is NAD(P)H-quinone oxidoreductase subunit K, chloroplastic.